The primary structure comprises 474 residues: Siroheme synthase (474 aa).

The interval 1-203 (MDYLPIFLKL…GRAEDAERVL (203 aa)) is precorrin-2 dehydrogenase /sirohydrochlorin ferrochelatase. NAD(+) is bound by residues 22–23 (EV) and 43–44 (AS). The uroporphyrinogen-III C-methyltransferase stretch occupies residues 219–474 (GSVALVGAGP…QETEGRSGNG (256 aa)). P228 is a binding site for S-adenosyl-L-methionine. The active-site Proton acceptor is the D251. Residue K273 is the Proton donor of the active site. S-adenosyl-L-methionine contacts are provided by residues 304 to 306 (GGD), I309, 334 to 335 (TA), M387, and G416.

This sequence in the N-terminal section; belongs to the precorrin-2 dehydrogenase / sirohydrochlorin ferrochelatase family. It in the C-terminal section; belongs to the precorrin methyltransferase family.

The enzyme catalyses uroporphyrinogen III + 2 S-adenosyl-L-methionine = precorrin-2 + 2 S-adenosyl-L-homocysteine + H(+). It catalyses the reaction precorrin-2 + NAD(+) = sirohydrochlorin + NADH + 2 H(+). It carries out the reaction siroheme + 2 H(+) = sirohydrochlorin + Fe(2+). It functions in the pathway cofactor biosynthesis; adenosylcobalamin biosynthesis; precorrin-2 from uroporphyrinogen III: step 1/1. Its pathway is cofactor biosynthesis; adenosylcobalamin biosynthesis; sirohydrochlorin from precorrin-2: step 1/1. The protein operates within porphyrin-containing compound metabolism; siroheme biosynthesis; precorrin-2 from uroporphyrinogen III: step 1/1. It participates in porphyrin-containing compound metabolism; siroheme biosynthesis; siroheme from sirohydrochlorin: step 1/1. It functions in the pathway porphyrin-containing compound metabolism; siroheme biosynthesis; sirohydrochlorin from precorrin-2: step 1/1. Its function is as follows. Multifunctional enzyme that catalyzes the SAM-dependent methylations of uroporphyrinogen III at position C-2 and C-7 to form precorrin-2 via precorrin-1. Then it catalyzes the NAD-dependent ring dehydrogenation of precorrin-2 to yield sirohydrochlorin. Finally, it catalyzes the ferrochelation of sirohydrochlorin to yield siroheme. In Methylococcus capsulatus (strain ATCC 33009 / NCIMB 11132 / Bath), this protein is Siroheme synthase.